The primary structure comprises 368 residues: MITLQVDLGERSYPIHIGTGLLGNAELLRPHVRGQHAVIVTNETVGPLYAARVEASLKELGKTVRVVTLPDGEAFKQWETLNLIFDALLSAGADRKTTLVALGGGVVGDMTGFAAACYMRGVPFVQVPTTLLSQVDSSVGGKTGINHPLGKNMIGAFHQPNAVIADIDTLRTLPARELAAGMAEVIKHGAIADADYFAWIERNIAALNSCDPDLMALAVQRSCEIKAGVVAQDEREGGLRAILNFGHTFGHAIEAGMGYGEWLHGEAVGCGMVMAADLSHRLGFIDTETRARIRQLTQAAMLPIVAPELGTDRYIELMKVDKKAEAGSIKFILLKKLGEAFITTVPDTDLRATLAQAVLKPPTEATVA.

NAD(+)-binding positions include Asp-71–Lys-76, Gly-105–Asp-109, Thr-129–Thr-130, Lys-142, Lys-151, and Thr-169–Thr-172. Residues Glu-184, His-247, and His-264 each contribute to the Zn(2+) site.

Belongs to the sugar phosphate cyclases superfamily. Dehydroquinate synthase family. Co(2+) is required as a cofactor. It depends on Zn(2+) as a cofactor. Requires NAD(+) as cofactor.

It is found in the cytoplasm. The catalysed reaction is 7-phospho-2-dehydro-3-deoxy-D-arabino-heptonate = 3-dehydroquinate + phosphate. Its pathway is metabolic intermediate biosynthesis; chorismate biosynthesis; chorismate from D-erythrose 4-phosphate and phosphoenolpyruvate: step 2/7. Its function is as follows. Catalyzes the conversion of 3-deoxy-D-arabino-heptulosonate 7-phosphate (DAHP) to dehydroquinate (DHQ). The polypeptide is 3-dehydroquinate synthase (Cupriavidus pinatubonensis (strain JMP 134 / LMG 1197) (Cupriavidus necator (strain JMP 134))).